The chain runs to 649 residues: Transcription factor tau 95 kDa subunit (649 aa).

The interval 1 to 21 (MPVEEPLATLSSIPDSSADQA) is disordered. The segment covering 9–19 (TLSSIPDSSAD) has biased composition (polar residues). Repeat 1 spans residues 221-239 (PSTDFQLPPPPKLSMVGFP). Residues 221-419 (PSTDFQLPPP…PPLVFESDTP (199 aa)) are 2 X repeats, Pro-rich. A Nuclear localization signal motif is present at residues 296–300 (AKKTK). Copy 2 of the repeat occupies 400–419 (PIVKKNVPKPPPLVFESDTP). Residues 556–612 (IAAGDDFDDNGAITEEPDDAALENEEMDTDQNLKVPASIDDDVDDVDADEEEQESFD) form a disordered region. Composition is skewed to acidic residues over residues 560-584 (DDFD…EMDT) and 594-610 (IDDD…EQES). Residue Ser617 is modified to Phosphoserine.

The protein belongs to the TFIIIC subunit 5 family. In terms of assembly, component of the TFIIIC complex composed of TFC1, TFC3, TFC4, TFC6, TFC7 and TFC8. The subunits are organized in two globular domains, tauA and tauB, connected by a proteolysis-sensitive and flexible linker. Interacts with TFC3, TFC4 and TFC6.

The protein resides in the nucleus. TFIIIC mediates tRNA and 5S RNA gene activation by binding to intragenic promoter elements. Upstream of the transcription start site, TFIIIC assembles the initiation complex TFIIIB-TFIIIC-tDNA, which is sufficient for RNA polymerase III recruitment and function. Part of the tauA domain of TFIIIC that binds boxA DNA promoter sites of tRNA and similar genes. Participates in the interconnection of tauA with tauB via its contacts with TFC3 and TFC6. Serves as a scaffold critical for tauA-DNA spatial configuration and tauB-DNA stability. The protein is Transcription factor tau 95 kDa subunit (TFC1) of Saccharomyces cerevisiae (strain ATCC 204508 / S288c) (Baker's yeast).